Here is a 195-residue protein sequence, read N- to C-terminus: ATP-dependent Clp protease proteolytic subunit (195 aa).

Ser-101 serves as the catalytic Nucleophile. His-126 is a catalytic residue.

This sequence belongs to the peptidase S14 family.

It localises to the plastid. Its subcellular location is the chloroplast stroma. The catalysed reaction is Hydrolysis of proteins to small peptides in the presence of ATP and magnesium. alpha-casein is the usual test substrate. In the absence of ATP, only oligopeptides shorter than five residues are hydrolyzed (such as succinyl-Leu-Tyr-|-NHMec, and Leu-Tyr-Leu-|-Tyr-Trp, in which cleavage of the -Tyr-|-Leu- and -Tyr-|-Trp bonds also occurs).. Cleaves peptides in various proteins in a process that requires ATP hydrolysis. Has a chymotrypsin-like activity. Plays a major role in the degradation of misfolded proteins. This Bigelowiella natans (Pedinomonas minutissima) protein is ATP-dependent Clp protease proteolytic subunit.